A 636-amino-acid chain; its full sequence is Nucleolar protein 9 (636 aa).

Residues 1 to 59 form a disordered region; sequence MGQGPRSPHKVGRRFPAGGKRGRGAKGSGRPLPGRKRQPWPPPDGRSEPAPDSHPHLSP. Ser-7 is modified (phosphoserine). Positions 45-57 are enriched in basic and acidic residues; the sequence is GRSEPAPDSHPHL. Pumilio repeat units lie at residues 92 to 123 and 189 to 223; these read EVET…KPLC and EVCD…ESER. The segment at 222-241 is disordered; sequence ERARPRGSQSSEAQKTPAQE. The segment covering 228–238 has biased composition (polar residues); the sequence is GSQSSEAQKTP. 4 Pumilio repeats span residues 313-348, 351-386, 509-544, and 547-581; these read SVDG…QSLF, HLQG…SPVF, LTGP…RRRV, and NLKG…KEIA.

Belongs to the NOP9 family.

The polypeptide is Nucleolar protein 9 (NOP9) (Homo sapiens (Human)).